The following is a 131-amino-acid chain: Small ribosomal subunit protein uS12 (131 aa).

The segment at 1-22 (MPTTQQLLRKGRKVLQKKSKVP) is disordered. Residues 9-20 (RKGRKVLQKKSK) show a composition bias toward basic residues. D89 is subject to 3-methylthioaspartic acid. The interval 102 to 131 (LDTQGVKDRNKSRSKYGTKKPKAGAAAAKK) is disordered. A compositionally biased stretch (basic residues) spans 113 to 131 (SRSKYGTKKPKAGAAAAKK).

Belongs to the universal ribosomal protein uS12 family. In terms of assembly, part of the 30S ribosomal subunit. Contacts proteins S8 and S17. May interact with IF1 in the 30S initiation complex.

In terms of biological role, with S4 and S5 plays an important role in translational accuracy. Its function is as follows. Interacts with and stabilizes bases of the 16S rRNA that are involved in tRNA selection in the A site and with the mRNA backbone. Located at the interface of the 30S and 50S subunits, it traverses the body of the 30S subunit contacting proteins on the other side and probably holding the rRNA structure together. The combined cluster of proteins S8, S12 and S17 appears to hold together the shoulder and platform of the 30S subunit. The polypeptide is Small ribosomal subunit protein uS12 (Deinococcus radiodurans (strain ATCC 13939 / DSM 20539 / JCM 16871 / CCUG 27074 / LMG 4051 / NBRC 15346 / NCIMB 9279 / VKM B-1422 / R1)).